A 430-amino-acid chain; its full sequence is Adenylosuccinate synthetase (430 aa).

GTP-binding positions include Gly-12–Lys-18 and Gly-40–Thr-42. Catalysis depends on Asp-13, which acts as the Proton acceptor. Mg(2+) contacts are provided by Asp-13 and Gly-40. IMP is bound by residues Asp-13–Lys-16, Asn-38–His-41, Thr-128, Arg-142, Gln-223, Thr-238, and Arg-302. The Proton donor role is filled by His-41. Thr-298–Arg-304 is a substrate binding site. GTP contacts are provided by residues Arg-304, Ser-330–Asp-332, and Ser-412–Gly-414.

This sequence belongs to the adenylosuccinate synthetase family. In terms of assembly, homodimer. The cofactor is Mg(2+).

The protein resides in the cytoplasm. It carries out the reaction IMP + L-aspartate + GTP = N(6)-(1,2-dicarboxyethyl)-AMP + GDP + phosphate + 2 H(+). It participates in purine metabolism; AMP biosynthesis via de novo pathway; AMP from IMP: step 1/2. Its function is as follows. Plays an important role in the de novo pathway of purine nucleotide biosynthesis. Catalyzes the first committed step in the biosynthesis of AMP from IMP. The polypeptide is Adenylosuccinate synthetase (Streptococcus pyogenes serotype M12 (strain MGAS9429)).